We begin with the raw amino-acid sequence, 250 residues long: Dihydroorotate dehydrogenase B (NAD(+)), electron transfer subunit (250 aa).

An FAD-binding FR-type domain is found at 1–94 (MKVVAQEEIA…MGPQGNGFDL (94 aa)). Residues 45 to 48 (RPIS), 62 to 64 (IYR), and 69 to 70 (GT) contribute to the FAD site. [2Fe-2S] cluster-binding residues include cysteine 214, cysteine 219, cysteine 222, and cysteine 237.

This sequence belongs to the PyrK family. Heterotetramer of 2 PyrK and 2 PyrD type B subunits. [2Fe-2S] cluster serves as cofactor. It depends on FAD as a cofactor.

Its pathway is pyrimidine metabolism; UMP biosynthesis via de novo pathway; orotate from (S)-dihydroorotate (NAD(+) route): step 1/1. Its function is as follows. Responsible for channeling the electrons from the oxidation of dihydroorotate from the FMN redox center in the PyrD type B subunit to the ultimate electron acceptor NAD(+). The protein is Dihydroorotate dehydrogenase B (NAD(+)), electron transfer subunit of Streptococcus pneumoniae serotype 4 (strain ATCC BAA-334 / TIGR4).